The sequence spans 578 residues: Type I restriction enzyme MjaVIII methylase subunit (578 aa).

Residues 250–255 (EVYTPI), 280–282 (SGS), Glu303, and 332–333 (DS) contribute to the S-adenosyl-L-methionine site.

This sequence belongs to the N(4)/N(6)-methyltransferase family. The type I restriction/modification system is composed of three polypeptides R, M and S.

It catalyses the reaction a 2'-deoxyadenosine in DNA + S-adenosyl-L-methionine = an N(6)-methyl-2'-deoxyadenosine in DNA + S-adenosyl-L-homocysteine + H(+). Functionally, the subtype gamma methyltransferase (M) subunit of a type I restriction enzyme. The M and S subunits together form a methyltransferase (MTase) that methylates A-2 on the top and A-3 on the bottom strand of the sequence 5'-GAYN(5)GTAA-3'. In the presence of the R subunit the complex can also act as an endonuclease, binding to the same target sequence but cutting the DNA some distance from this site. Whether the DNA is cut or modified depends on the methylation state of the target sequence. When the target site is unmodified, the DNA is cut. When the target site is hemimethylated, the complex acts as a maintenance MTase modifying the DNA so that both strands become methylated. After locating a non-methylated recognition site, the enzyme complex serves as a molecular motor that translocates DNA in an ATP-dependent manner until a collision occurs that triggers cleavage. This is Type I restriction enzyme MjaVIII methylase subunit from Methanocaldococcus jannaschii (strain ATCC 43067 / DSM 2661 / JAL-1 / JCM 10045 / NBRC 100440) (Methanococcus jannaschii).